Here is a 528-residue protein sequence, read N- to C-terminus: Probable methylmalonate-semialdehyde/malonate-semialdehyde dehydrogenase [acylating], mitochondrial (528 aa).

A mitochondrion-targeting transit peptide spans 1–26 (MLSFKFAKSASKVIGNRNFHSSSASL). Positions 175, 199, 202, and 203 each coordinate NAD(+). Residue cysteine 307 is the Nucleophile of the active site. Glutamate 408 lines the NAD(+) pocket.

It belongs to the aldehyde dehydrogenase family. Homotetramer.

The protein resides in the mitochondrion. It catalyses the reaction 2-methyl-3-oxopropanoate + NAD(+) + CoA + H2O = propanoyl-CoA + hydrogencarbonate + NADH + H(+). It carries out the reaction 3-oxopropanoate + NAD(+) + CoA + H2O = hydrogencarbonate + acetyl-CoA + NADH + H(+). Its function is as follows. Probable malonate and methylmalonate semialdehyde dehydrogenase involved in the catabolism of valine, thymine, and compounds catabolized by way of beta-alanine, including uracil and cytidine. This Dictyostelium discoideum (Social amoeba) protein is Probable methylmalonate-semialdehyde/malonate-semialdehyde dehydrogenase [acylating], mitochondrial (mmsdh).